Here is a 132-residue protein sequence, read N- to C-terminus: L-ectoine synthase (132 aa).

Belongs to the ectoine synthase family.

It carries out the reaction (2S)-4-acetamido-2-aminobutanoate = L-ectoine + H2O. The protein operates within amine and polyamine biosynthesis; ectoine biosynthesis; L-ectoine from L-aspartate 4-semialdehyde: step 3/3. Catalyzes the circularization of gamma-N-acetyl-alpha,gamma-diaminobutyric acid (ADABA) to ectoine (1,4,5,6-tetrahydro-2-methyl-4-pyrimidine carboxylic acid), which is an excellent osmoprotectant. The protein is L-ectoine synthase of Bordetella avium (strain 197N).